Consider the following 419-residue polypeptide: [Butirosin acyl-carrier protein]--L-glutamate ligase (419 aa).

The ATP-grasp domain maps to 144-345 (RRLMERNGFN…FVESRVLVFN (202 aa)). 174-231 (ISAGFSKCVLKVPYGSSGKGLKVIDNERNFRFLLNYIQNRQTNVDLLLEGWHPHRLSL) lines the ATP pocket. Mg(2+) contacts are provided by aspartate 298, glutamate 312, and asparagine 314. 3 residues coordinate Mn(2+): aspartate 298, glutamate 312, and asparagine 314.

As to quaternary structure, monomer. The cofactor is Mg(2+). Mn(2+) serves as cofactor.

The enzyme catalyses holo-[BtrI ACP] + L-glutamate + ATP = gamma-L-glutamyl-[BtrI ACP] + ADP + phosphate. It catalyses the reaction 4-aminobutanoyl-[BtrI ACP] + L-glutamate + ATP = 4-(gamma-L-glutamylamino)butanoyl-[BtrI ACP] + ADP + phosphate + H(+). It participates in antibiotic biosynthesis; butirosin biosynthesis. ATP-dependent ligase that catalyzes 2 steps in the biosynthesis of the side chain of the aminoglycoside antibiotics in the biosynthetic pathway of butirosin. Mediates the addition of one molecule of L-glutamate to a dedicated acyl-carrier protein. Following decarboxylation of the product by BtrK, adds a second L-glutamate molecule. The protein is [Butirosin acyl-carrier protein]--L-glutamate ligase (btrJ) of Niallia circulans (Bacillus circulans).